Here is a 252-residue protein sequence, read N- to C-terminus: Isoprenyl transferase (252 aa).

Residue aspartate 32 is part of the active site. Aspartate 32 contributes to the Mg(2+) binding site. Substrate is bound by residues 33–36 (GNGR), tryptophan 37, arginine 45, histidine 49, and 77–79 (STE). Residue asparagine 80 is the Proton acceptor of the active site. Substrate contacts are provided by residues tryptophan 81, arginine 83, arginine 200, and 206-208 (RLS). Glutamate 219 contributes to the Mg(2+) binding site.

This sequence belongs to the UPP synthase family. Homodimer. It depends on Mg(2+) as a cofactor.

Catalyzes the condensation of isopentenyl diphosphate (IPP) with allylic pyrophosphates generating different type of terpenoids. This Listeria monocytogenes serotype 4b (strain F2365) protein is Isoprenyl transferase.